The chain runs to 124 residues: Small ribosomal subunit protein uS12 (124 aa).

A 3-methylthioaspartic acid modification is found at Asp89.

The protein belongs to the universal ribosomal protein uS12 family. In terms of assembly, part of the 30S ribosomal subunit. Contacts proteins S8 and S17. May interact with IF1 in the 30S initiation complex.

In terms of biological role, with S4 and S5 plays an important role in translational accuracy. Interacts with and stabilizes bases of the 16S rRNA that are involved in tRNA selection in the A site and with the mRNA backbone. Located at the interface of the 30S and 50S subunits, it traverses the body of the 30S subunit contacting proteins on the other side and probably holding the rRNA structure together. The combined cluster of proteins S8, S12 and S17 appears to hold together the shoulder and platform of the 30S subunit. The polypeptide is Small ribosomal subunit protein uS12 (Nitratiruptor sp. (strain SB155-2)).